A 946-amino-acid polypeptide reads, in one-letter code: Protein RRC1 (946 aa).

Disordered regions lie at residues 1–29 (MSSF…KAED) and 41–183 (SFQG…NLYV). 3 stretches are compositionally biased toward basic and acidic residues: residues 15-29 (KHRE…KAED), 62-75 (DKPK…KSKD), and 98-147 (KGKE…DRQG). The region spanning 179 to 260 (TNLYVGNLSP…YELKIGWGKA (82 aa)) is the RRM domain. An SURP motif repeat occupies 329 to 372 (VIDTLALYVLDGECAFEQAIMERGRGNPLFKFMFELGSKEHTYY). In terms of domain architecture, CID spans 437 to 582 (LTDPQRDEFE…GLRSTFLRSG (146 aa)). The region spanning 631-665 (LMNLPIAELERRCRHNGLSLVGGRVMMVTRLLSLE) is the SAP domain. Disordered stretches follow at residues 740-797 (ASKW…EQRQ) and 836-946 (EVDY…RGTR). Residues 757–767 (SSSSGSDNTGG) show a composition bias toward polar residues. 3 stretches are compositionally biased toward basic and acidic residues: residues 772 to 781 (ADGEDLKGND), 854 to 868 (IIER…QESS), and 886 to 946 (STRE…RGTR).

As to quaternary structure, component of the SWAP1-SFPS-RRC1 splicing factor complex which modulates pre-mRNA splicing to promote photomorphogenesis. Interacts with SWAP1 in a light-independent manner. Expressed in leaves, inflorescence stems, roots, flower buds, open flowers and siliques.

It is found in the nucleus speckle. Functionally, as a member of the SWAP1-SFPS-RRC1 splicing factor complex, modulates photomorphogenesis by regulating the gene expression and pre-messenger RNA (mRNA) alternative splicing of a large number of genes, including those involved in plant responses to light signaling. SR-like splicing factor required for phytochrome B (phyB) signal transduction and involved in phyB-dependent alternative splicing. The polypeptide is Protein RRC1 (Arabidopsis thaliana (Mouse-ear cress)).